Reading from the N-terminus, the 1047-residue chain is Atrial natriuretic peptide receptor 2 (1047 aa).

A signal peptide spans 1-22 (MALPSLLLLVAALAGGVRPPGA). Over 23–458 (RNLTLAVVLP…DKTPLSTLAI (436 aa)) the chain is Extracellular. N-linked (GlcNAc...) asparagine glycans are attached at residues Asn-24 and Asn-35. Cysteines 75 and 101 form a disulfide. Asn-161, Asn-195, Asn-244, Asn-277, and Asn-349 each carry an N-linked (GlcNAc...) asparagine glycan. The helical transmembrane segment at 459-478 (VALGTGITFIMFGVSSFLIF) threads the bilayer. Over 479–1047 (RKLMLEKELA…GERKGPPGLL (569 aa)) the chain is Cytoplasmic. At Ser-513 the chain carries Phosphoserine. The region spanning 513 to 786 (SRLTLSLRGS…PDFGQIKGFI (274 aa)) is the Protein kinase domain. Thr-516 is subject to Phosphothreonine. Ser-518, Ser-522, Ser-523, and Ser-526 each carry phosphoserine. A Phosphothreonine modification is found at Thr-529. In terms of domain architecture, Guanylate cyclase spans 861-991 (TIYFSDIVGF…DTVNTASRME (131 aa)).

This sequence belongs to the adenylyl cyclase class-4/guanylyl cyclase family. In terms of processing, phosphorylated. Phosphorylation of the protein kinase-like domain is required for full activation by CNP. Glycosylated.

The protein localises to the cell membrane. It carries out the reaction GTP = 3',5'-cyclic GMP + diphosphate. Receptor for the C-type natriuretic peptide NPPC/CNP hormone. Has guanylate cyclase activity upon binding of its ligand. May play a role in the regulation of skeletal growth. This chain is Atrial natriuretic peptide receptor 2 (NPR2), found in Homo sapiens (Human).